The primary structure comprises 523 residues: Uridylate cyclase (523 aa).

Guanylate cyclase domains follow at residues 69–209 and 318–438; these read VHVY…AKLA and MSIF…IGIR. Residues Tyr-72 and Arg-125 each coordinate a ribonucleoside 5'-triphosphate. Residues Asp-323, Ile-324, and Asp-372 each contribute to the Mn(2+) site.

The protein belongs to the adenylyl cyclase class-4/guanylyl cyclase family. Pyrimidine cyclase subfamily. As to quaternary structure, monomer. Mn(2+) is required as a cofactor.

Its subcellular location is the cytoplasm. It carries out the reaction UTP = 3',5'-cyclic UMP + diphosphate. Its function is as follows. Pycsar (pyrimidine cyclase system for antiphage resistance) provides immunity against bacteriophage. The pyrimidine cyclase (PycC) synthesizes cyclic nucleotides in response to infection; these serve as specific second messenger signals. The signals activate the nearby effector, leading to bacterial cell death and abortive phage infection. A clade A Pycsar system. In terms of biological role, the pyrimidine cyclase gene of a two-gene Pycsar system, generates cyclic UMP (cUMP) from UTP, has little to no activity on ATP, CTP or GTP. Expression of this and effector RsPycTM (AC A0A4R2UGS4) probably confers resistance to some bacteriophage. The genes are probably only expressed in response to bacteriophage infection. In Rhizobium sp. (strain PP-F2F-G36), this protein is Uridylate cyclase.